A 384-amino-acid chain; its full sequence is DNA dC-&gt;dU-editing enzyme APOBEC-3G (384 aa).

Residues 1 to 60 (MKPHFRNTVERMYRDTFSYNFYNRPILSRRNTVWLCYEVKTKGPSRPPLDAKIFRGQVYS) are essential for cytoplasmic localization. Residues 29–138 (RRNTVWLCYE…PDYQEALRSL (110 aa)) form the CMP/dCMP-type deaminase 1 domain. Threonine 32 carries the post-translational modification Phosphothreonine; by PKA. (Microbial infection) Glycyl lysine isopeptide (Lys-Gly) (interchain with G-Cter in ubiquitin) cross-links involve residues lysine 42, lysine 52, and lysine 63. Residues histidine 65, cysteine 97, and cysteine 100 each coordinate Zn(2+). Residues lysine 150 and lysine 163 each participate in a (Microbial infection) Glycyl lysine isopeptide (Lys-Gly) (interchain with G-Cter in ubiquitin) cross-link. The necessary for homooligomerization stretch occupies residues 209 to 336 (EPWVRGRHET…TLAEAGAKIS (128 aa)). Residues 213 to 215 (RGR) are interaction with DNA. The 115-residue stretch at 214–328 (GRHETYLCYE…GRCQEGLRTL (115 aa)) folds into the CMP/dCMP-type deaminase 2 domain. At threonine 218 the chain carries Phosphothreonine; by PKA and CAMK2. Lysine 249 participates in a covalent cross-link: (Microbial infection) Glycyl lysine isopeptide (Lys-Gly) (interchain with G-Cter in ubiquitin). Histidine 257 is a Zn(2+) binding site. Glutamate 259 serves as the catalytic Proton donor. Lysine 270 participates in a covalent cross-link: (Microbial infection) Glycyl lysine isopeptide (Lys-Gly) (interchain with G-Cter in ubiquitin). Positions 288 and 291 each coordinate Zn(2+). (Microbial infection) Glycyl lysine isopeptide (Lys-Gly) (interchain with G-Cter in ubiquitin) cross-links involve residues lysine 297, lysine 301, and lysine 303. The tract at residues 313–320 (RIYDDQGR) is interaction with DNA. Lysine 334 participates in a covalent cross-link: (Microbial infection) Glycyl lysine isopeptide (Lys-Gly) (interchain with G-Cter in ubiquitin).

The protein belongs to the cytidine and deoxycytidylate deaminase family. As to quaternary structure, homodimer. Homooligomer. Can bind RNA to form ribonucleoprotein complexes of high-molecular-mass (HMM) or low-molecular-mass (LMM). HMM is inactive and heterogeneous in protein composition because of binding nonselectively to cellular RNAs, which in turn are associated with variety of cellular proteins. The LMM form which is enzymatically active has few or no RNAs associated. Its ability to form homooligomer is distinct from its ability to assemble into HMM. Interacts with APOBEC3B, APOBEC3F, MOV10, AGO2, EIF4E, EIF4ENIF1, DCP2 and DDX6 in an RNA-dependent manner. Interacts with AGO1, AGO3 and PKA/PRKACA. In terms of assembly, (Microbial infection) Interacts with HIV-1 Vif; promoting its ubiquitination by a cullin-5-RING E3 ubiquitin-protein ligase complex (ECS complex) hijacked by the HIV-1 Vif. (Microbial infection) Interacts with HIV-1 reverse transcriptase/ribonuclease H. As to quaternary structure, (Microbial infection) Interacts with hepatitis B virus capsid protein. It depends on Zn(2+) as a cofactor. Post-translationally, (Microbial infection) Following infection by HIV-1, ubiquitinated by a cullin-5-RING E3 ubiquitin-protein ligase complex (ECS complex) hijacked by the HIV-1 Vif protein, leading to its degradation. Deubiquitinated by USP49; leading to stabilization. In terms of processing, phosphorylation at Thr-32 reduces its binding to HIV-1 Vif and subsequent ubiquitination and degradation thus promoting its antiviral activity. In terms of tissue distribution, expressed in spleen, testes, ovary and peripheral blood leukocytes and CD4+ lymphocytes. Also expressed in non-permissive peripheral blood mononuclear cells, and several tumor cell lines; no expression detected in permissive lymphoid and non-lymphoid cell lines. Exists only in the LMM form in peripheral blood-derived resting CD4 T-cells and monocytes, both of which are refractory to HIV-1 infection. LMM is converted to a HMM complex when resting CD4 T-cells are activated or when monocytes are induced to differentiate into macrophages. This change correlates with increased susceptibility of these cells to HIV-1 infection.

The protein resides in the cytoplasm. It localises to the nucleus. The protein localises to the P-body. It catalyses the reaction a 2'-deoxycytidine in single-stranded DNA + H2O + H(+) = a 2'-deoxyuridine in single-stranded DNA + NH4(+). (Microbial infection) Antiviral activity is neutralized by the HIV-1 virion infectivity factor (Vif), that prevents its incorporation into progeny virions by both inhibiting its translation and/or by inducing its ubiquitination and subsequent degradation by the 26S proteasome. Can also be neutralized by simian immunodeficiency virus sooty mangabey monkey virus (SIV-sm) and chimpanzee immunodeficiency virus (SIV-cpz) Vif. In terms of biological role, DNA deaminase (cytidine deaminase) which acts as an inhibitor of retrovirus replication and retrotransposon mobility via deaminase-dependent and -independent mechanisms. Exhibits potent antiviral activity against Vif-deficient HIV-1. After the penetration of retroviral nucleocapsids into target cells of infection and the initiation of reverse transcription, it can induce the conversion of cytosine to uracil in the minus-sense single-strand viral DNA, leading to G-to-A hypermutations in the subsequent plus-strand viral DNA. The resultant detrimental levels of mutations in the proviral genome, along with a deamination-independent mechanism that works prior to the proviral integration, together exert efficient antiretroviral effects in infected target cells. Selectively targets single-stranded DNA and does not deaminate double-stranded DNA or single- or double-stranded RNA. Exhibits antiviral activity also against simian immunodeficiency viruses (SIVs), hepatitis B virus (HBV), equine infectious anemia virus (EIAV), xenotropic MuLV-related virus (XMRV) and simian foamy virus (SFV). May inhibit the mobility of LTR and non-LTR retrotransposons. The protein is DNA dC-&gt;dU-editing enzyme APOBEC-3G of Homo sapiens (Human).